Here is a 522-residue protein sequence, read N- to C-terminus: 2-isopropylmalate synthase (522 aa).

One can recognise a Pyruvate carboxyltransferase domain in the interval 5 to 267 (VIIFDTTLRD…DCGINAKEIH (263 aa)). Residues aspartate 14, histidine 202, histidine 204, and asparagine 238 each contribute to the Mn(2+) site. The interval 392–522 (QLQHMMVHSD…IHKERELGGV (131 aa)) is regulatory domain.

The protein belongs to the alpha-IPM synthase/homocitrate synthase family. LeuA type 1 subfamily. In terms of assembly, homodimer. Mn(2+) is required as a cofactor.

It localises to the cytoplasm. It carries out the reaction 3-methyl-2-oxobutanoate + acetyl-CoA + H2O = (2S)-2-isopropylmalate + CoA + H(+). Its pathway is amino-acid biosynthesis; L-leucine biosynthesis; L-leucine from 3-methyl-2-oxobutanoate: step 1/4. Catalyzes the condensation of the acetyl group of acetyl-CoA with 3-methyl-2-oxobutanoate (2-ketoisovalerate) to form 3-carboxy-3-hydroxy-4-methylpentanoate (2-isopropylmalate). In Shewanella frigidimarina (strain NCIMB 400), this protein is 2-isopropylmalate synthase.